A 239-amino-acid chain; its full sequence is Orotidine 5'-phosphate decarboxylase (239 aa).

Substrate-binding positions include aspartate 10, lysine 32, 59–68 (DLKLHDIPNT), threonine 122, arginine 184, glutamine 193, glycine 213, and arginine 214. Lysine 61 functions as the Proton donor in the catalytic mechanism.

It belongs to the OMP decarboxylase family. Type 1 subfamily. In terms of assembly, homodimer.

The catalysed reaction is orotidine 5'-phosphate + H(+) = UMP + CO2. Its pathway is pyrimidine metabolism; UMP biosynthesis via de novo pathway; UMP from orotate: step 2/2. Functionally, catalyzes the decarboxylation of orotidine 5'-monophosphate (OMP) to uridine 5'-monophosphate (UMP). In Geobacillus sp. (strain WCH70), this protein is Orotidine 5'-phosphate decarboxylase.